A 168-amino-acid polypeptide reads, in one-letter code: Protein-export protein SecB (168 aa).

A disordered region spans residues 1 to 21; the sequence is MADQPSGNNDAKQAETNGNTV.

This sequence belongs to the SecB family. In terms of assembly, homotetramer, a dimer of dimers. One homotetramer interacts with 1 SecA dimer.

The protein localises to the cytoplasm. Functionally, one of the proteins required for the normal export of preproteins out of the cell cytoplasm. It is a molecular chaperone that binds to a subset of precursor proteins, maintaining them in a translocation-competent state. It also specifically binds to its receptor SecA. The chain is Protein-export protein SecB from Chelativorans sp. (strain BNC1).